Reading from the N-terminus, the 162-residue chain is UPF0114 protein VCM66_0196 (162 aa).

4 consecutive transmembrane segments (helical) span residues isoleucine 15 to phenylalanine 35, leucine 53 to valine 73, valine 109 to methionine 126, and isoleucine 136 to leucine 156.

Belongs to the UPF0114 family.

Its subcellular location is the cell membrane. The protein is UPF0114 protein VCM66_0196 of Vibrio cholerae serotype O1 (strain M66-2).